A 380-amino-acid polypeptide reads, in one-letter code: Tetraacyldisaccharide 4'-kinase (380 aa).

51–58 is a binding site for ATP; it reads SVGGTGKT.

Belongs to the LpxK family.

The catalysed reaction is a lipid A disaccharide + ATP = a lipid IVA + ADP + H(+). It participates in glycolipid biosynthesis; lipid IV(A) biosynthesis; lipid IV(A) from (3R)-3-hydroxytetradecanoyl-[acyl-carrier-protein] and UDP-N-acetyl-alpha-D-glucosamine: step 6/6. Its function is as follows. Transfers the gamma-phosphate of ATP to the 4'-position of a tetraacyldisaccharide 1-phosphate intermediate (termed DS-1-P) to form tetraacyldisaccharide 1,4'-bis-phosphate (lipid IVA). The polypeptide is Tetraacyldisaccharide 4'-kinase (Bacteroides thetaiotaomicron (strain ATCC 29148 / DSM 2079 / JCM 5827 / CCUG 10774 / NCTC 10582 / VPI-5482 / E50)).